A 477-amino-acid chain; its full sequence is Xylose isomerase (477 aa).

The active site involves histidine 142. Mn(2+) contacts are provided by glutamate 273, glutamate 309, histidine 312, aspartate 337, aspartate 348, aspartate 350, and aspartate 380.

Belongs to the xylose isomerase family. The cofactor is Mn(2+).

The catalysed reaction is alpha-D-xylose = alpha-D-xylulofuranose. The polypeptide is Xylose isomerase (XYLA) (Arabidopsis thaliana (Mouse-ear cress)).